Consider the following 415-residue polypeptide: Mitochondrial distribution and morphology protein 12 (415 aa).

The region spanning 1 to 402 is the SMP-LTD domain; sequence MSFDINWSEL…WPSWVCFDLN (402 aa). The segment at 53 to 146 is disordered; the sequence is EITIRHIGDP…PPLTDLRRSR (94 aa). 2 stretches are compositionally biased toward acidic residues: residues 62–75 and 92–103; these read PFDD…DDDE and NSSDDDEDDEYD.

It belongs to the MDM12 family. In terms of assembly, component of the ER-mitochondria encounter structure (ERMES) or MDM complex, composed of MMM1, MDM10, MDM12 and MDM34. An MMM1 homodimer associates with one molecule of MDM12 on each side in a pairwise head-to-tail manner, and the SMP-LTD domains of MMM1 and MDM12 generate a continuous hydrophobic tunnel for phospholipid trafficking.

Its subcellular location is the mitochondrion outer membrane. The protein localises to the endoplasmic reticulum membrane. Its function is as follows. Component of the ERMES/MDM complex, which serves as a molecular tether to connect the endoplasmic reticulum (ER) and mitochondria. Components of this complex are involved in the control of mitochondrial shape and protein biogenesis, and function in nonvesicular lipid trafficking between the ER and mitochondria. MDM12 is required for the interaction of the ER-resident membrane protein MMM1 and the outer mitochondrial membrane-resident beta-barrel protein MDM10. The MDM12-MMM1 subcomplex functions in the major beta-barrel assembly pathway that is responsible for biogenesis of all mitochondrial outer membrane beta-barrel proteins, and acts in a late step after the SAM complex. The MDM10-MDM12-MMM1 subcomplex further acts in the TOM40-specific pathway after the action of the MDM12-MMM1 complex. Essential for establishing and maintaining the structure of mitochondria and maintenance of mtDNA nucleoids. In Debaryomyces hansenii (strain ATCC 36239 / CBS 767 / BCRC 21394 / JCM 1990 / NBRC 0083 / IGC 2968) (Yeast), this protein is Mitochondrial distribution and morphology protein 12.